The primary structure comprises 305 residues: Acetyl-coenzyme A carboxylase carboxyl transferase subunit beta (305 aa).

The region spanning leucine 27–arginine 296 is the CoA carboxyltransferase N-terminal domain. Residues cysteine 31, cysteine 34, cysteine 50, and cysteine 53 each contribute to the Zn(2+) site. The segment at cysteine 31–cysteine 53 adopts a C4-type zinc-finger fold.

It belongs to the AccD/PCCB family. In terms of assembly, acetyl-CoA carboxylase is a heterohexamer composed of biotin carboxyl carrier protein (AccB), biotin carboxylase (AccC) and two subunits each of ACCase subunit alpha (AccA) and ACCase subunit beta (AccD). It depends on Zn(2+) as a cofactor.

It localises to the cytoplasm. It carries out the reaction N(6)-carboxybiotinyl-L-lysyl-[protein] + acetyl-CoA = N(6)-biotinyl-L-lysyl-[protein] + malonyl-CoA. It functions in the pathway lipid metabolism; malonyl-CoA biosynthesis; malonyl-CoA from acetyl-CoA: step 1/1. Its function is as follows. Component of the acetyl coenzyme A carboxylase (ACC) complex. Biotin carboxylase (BC) catalyzes the carboxylation of biotin on its carrier protein (BCCP) and then the CO(2) group is transferred by the transcarboxylase to acetyl-CoA to form malonyl-CoA. This is Acetyl-coenzyme A carboxylase carboxyl transferase subunit beta from Chloroflexus aurantiacus (strain ATCC 29366 / DSM 635 / J-10-fl).